The primary structure comprises 468 residues: ATP synthase subunit beta 1 (468 aa).

155 to 162 (GGAGVGKT) provides a ligand contact to ATP.

This sequence belongs to the ATPase alpha/beta chains family. F-type ATPases have 2 components, CF(1) - the catalytic core - and CF(0) - the membrane proton channel. CF(1) has five subunits: alpha(3), beta(3), gamma(1), delta(1), epsilon(1). CF(0) has three main subunits: a(1), b(2) and c(9-12). The alpha and beta chains form an alternating ring which encloses part of the gamma chain. CF(1) is attached to CF(0) by a central stalk formed by the gamma and epsilon chains, while a peripheral stalk is formed by the delta and b chains.

It localises to the cell inner membrane. The enzyme catalyses ATP + H2O + 4 H(+)(in) = ADP + phosphate + 5 H(+)(out). Its function is as follows. Produces ATP from ADP in the presence of a proton gradient across the membrane. The catalytic sites are hosted primarily by the beta subunits. The chain is ATP synthase subunit beta 1 from Syntrophotalea carbinolica (strain DSM 2380 / NBRC 103641 / GraBd1) (Pelobacter carbinolicus).